A 585-amino-acid chain; its full sequence is Complement component C8 alpha chain (585 aa).

The N-terminal stretch at 1-20 is a signal peptide; sequence MLVAAFFTLFLVTCQPAVTA. A propeptide spanning residues 21 to 30 is cleaved from the precursor; that stretch reads QEKVNQRVNR. The TSP type-1 1 domain maps to 38–91; that stretch reads DCQLSSWSEWTDCFPCQDTKYRHRSLLQPNKFGGTICSGDIWDRASCYSPTACL. 7 cysteine pairs are disulfide-bonded: Cys-39–Cys-74, Cys-50–Cys-84, Cys-53–Cys-90, Cys-96–Cys-108, Cys-102–Cys-121, Cys-115–Cys-130, and Cys-140–Cys-177. A glycan (C-linked (Man) tryptophan) is linked at Trp-44. The 39-residue stretch at 94–132 folds into the LDL-receptor class A domain; that stretch reads AQCGQDFQCKETGRCLKRHLVCNGENDCLDGSDEDNCED. Residues Leu-113, Asn-116, Glu-118, Asp-120, Asp-126, and Glu-127 each coordinate Ca(2+). The MACPF domain occupies 136-499; the sequence is TESDCAQYDP…QYLMEFNACR (364 aa). 4 consecutive transmembrane segments (beta stranded) span residues 248–256, 259–266, 377–384, and 391–396; these read AGVTISAGL, SPLLGTVG, GGFGEIQY, and AQGILS. Cysteines 375 and 400 form a disulfide. An N-linked (GlcNAc...) asparagine glycan is attached at Asn-438. Intrachain disulfides connect Cys-498–Cys-545, Cys-500–Cys-516, Cys-503–Cys-518, and Cys-520–Cys-529. The EGF-like domain occupies 499-530; it reads RCGPCFNNGKPILEGTSCRCQCSLGLQGPACE. The TSP type-1 2 domain maps to 540 to 584; the sequence is DGHWSCWGSWSPCTAGTRERRRECNNPAPQNGGAPCPGWRVQTQA. 3 C-linked (Man) tryptophan glycosylation sites follow: Trp-543, Trp-546, and Trp-549. Disulfide bonds link Cys-552/Cys-585 and Cys-563/Cys-575.

Belongs to the complement C6/C7/C8/C9 family. Heterotrimer of 3 chains: alpha (C8A), beta (C8B) and gamma (C8G); the alpha and gamma chains are disulfide bonded. Component of the membrane attack complex (MAC), composed of complement C5b, C6, C7, C8A, C8B, C8G and multiple copies of the pore-forming subunit C9.

It is found in the secreted. Its subcellular location is the target cell membrane. Membrane attack complex (MAC) assembly is inhibited by CD59, thereby protecting self-cells from damage during complement activation. CD59 acts by binding to the beta-haipins of C8 (C8A and C8B), forming an intermolecular beta-sheet that prevents incorporation of the multiple copies of C9 required for complete formation of the osmolytic pore. MAC assembly is also inhibited by clusterin (CLU) chaperones that inhibit polymerization of C9. Component of the membrane attack complex (MAC), a multiprotein complex activated by the complement cascade, which inserts into a target cell membrane and forms a pore, leading to target cell membrane rupture and cell lysis. The MAC is initiated by proteolytic cleavage of C5 into complement C5b in response to the classical, alternative, lectin and GZMK complement pathways. The complement pathways consist in a cascade of proteins that leads to phagocytosis and breakdown of pathogens and signaling that strengthens the adaptive immune system. C8A, together with C8B and C8G, inserts into the target membrane, but does not form pores by itself. During MAC assembly, associates with C5b, C6 and C7 to form the C5b8 intermediate complex that inserts into the target membrane and traverses the bilayer increasing membrane rigidity. The protein is Complement component C8 alpha chain (C8A) of Oryctolagus cuniculus (Rabbit).